The chain runs to 142 residues: Truncated non-functional hemagglutinin-esterase homolog (142 aa).

Over 1-117 (MNFTVPVQAI…ESVDVISSSY (117 aa)) the chain is Virion surface. Asn2 carries an N-linked (GlcNAc...) asparagine; by host glycan. Cys28 and Cys33 are joined by a disulfide. Residues Asn46 and Asn67 are each glycosylated (N-linked (GlcNAc...) asparagine; by host). Cys70 and Cys95 form a disulfide bridge. Residues 118 to 138 (FVATWVLLVVVIILVFIIISF) form a helical membrane-spanning segment. Over 139–142 (CISN) the chain is Intravirion.

It belongs to the influenza type C/coronaviruses hemagglutinin-esterase family. As to quaternary structure, homodimer. In terms of processing, N-glycosylated.

It is found in the virion membrane. The protein localises to the host cell membrane. The polypeptide is Truncated non-functional hemagglutinin-esterase homolog (HE) (Berne virus (BEV)).